Consider the following 109-residue polypeptide: Large ribosomal subunit protein uL22 (109 aa).

The protein belongs to the universal ribosomal protein uL22 family. As to quaternary structure, part of the 50S ribosomal subunit.

Functionally, this protein binds specifically to 23S rRNA; its binding is stimulated by other ribosomal proteins, e.g. L4, L17, and L20. It is important during the early stages of 50S assembly. It makes multiple contacts with different domains of the 23S rRNA in the assembled 50S subunit and ribosome. The globular domain of the protein is located near the polypeptide exit tunnel on the outside of the subunit, while an extended beta-hairpin is found that lines the wall of the exit tunnel in the center of the 70S ribosome. The chain is Large ribosomal subunit protein uL22 from Dechloromonas aromatica (strain RCB).